A 65-amino-acid polypeptide reads, in one-letter code: Alpha-toxin Lqq4 (65 aa).

Positions Arg-3 to Arg-65 constitute an LCN-type CS-alpha/beta domain. The specificity module, loop 1 stretch occupies residues Asp-9–Cys-13. 4 disulfide bridges follow: Cys-13-Cys-64, Cys-17-Cys-37, Cys-23-Cys-47, and Cys-27-Cys-49. Specificity module, loop stretches follow at residues Leu-40 to Gly-44 and Pro-57 to Arg-65. Position 65 is an arginine amide (Arg-65).

This sequence belongs to the long (4 C-C) scorpion toxin superfamily. Sodium channel inhibitor family. Alpha subfamily. Post-translationally, the recombinant toxin which is used for activity tests is not amidated. However, C-terminal amidation does not appear to play an important role in activity, since the non-amidated recombinant toxin and the native toxin (which is amidated) show similar activities on all sodium channels tested. Expressed by the venom gland.

It is found in the secreted. Alpha toxins bind voltage-independently at site-3 of sodium channels (Nav) and inhibit the inactivation of the activated channels, thereby blocking neuronal transmission. Both native and recombinant (non-amidated) toxins inhibit inactivation of Nav1.2/SCN2A (EC(50)=31.2-36.6 nM), Nav1.6/SCN8A (EC(50)=6.9-8.9 nM), and Nav1.7/SCN9A (EC(50)=182.0-260.1 nM). The polypeptide is Alpha-toxin Lqq4 (Leiurus quinquestriatus quinquestriatus (Egyptian scorpion)).